We begin with the raw amino-acid sequence, 327 residues long: Ornithine carbamoyltransferase, mitochondrial (327 aa).

Carbamoyl phosphate-binding positions include 63 to 66, R114, H141, and Q144; that span reads STRT. The L-ornithine site is built by N172, D236, S240, and M241. Residue C276 is the Proton acceptor of the active site. Carbamoyl phosphate is bound by residues 276–277 and R303; that span reads CL.

The protein belongs to the aspartate/ornithine carbamoyltransferase superfamily. OTCase family. Interacts with trx2.

The protein localises to the mitochondrion matrix. The catalysed reaction is carbamoyl phosphate + L-ornithine = L-citrulline + phosphate + H(+). It participates in amino-acid biosynthesis; L-arginine biosynthesis; L-arginine from L-ornithine and carbamoyl phosphate: step 1/3. Ornithine carbamoyltransferase involved in the synthesis of arginine from glutamate via ornithine and the urea cycle. The chain is Ornithine carbamoyltransferase, mitochondrial (arg3) from Schizosaccharomyces pombe (strain 972 / ATCC 24843) (Fission yeast).